A 120-amino-acid polypeptide reads, in one-letter code: Large ribosomal subunit protein uL18 (120 aa).

It belongs to the universal ribosomal protein uL18 family. As to quaternary structure, part of the 50S ribosomal subunit; part of the 5S rRNA/L5/L18/L25 subcomplex. Contacts the 5S and 23S rRNAs.

Functionally, this is one of the proteins that bind and probably mediate the attachment of the 5S RNA into the large ribosomal subunit, where it forms part of the central protuberance. In Staphylococcus haemolyticus (strain JCSC1435), this protein is Large ribosomal subunit protein uL18.